The following is a 29-amino-acid chain: Cyclotide mech-7 (29 aa).

A cross-link (cyclopeptide (Gly-Asp)) is located at residues 1–29 (GIPICGETCTIGTCNTPGCTCSWPVCTRD). Cystine bridges form between Cys-5–Cys-19, Cys-9–Cys-21, and Cys-14–Cys-26.

Post-translationally, this is a cyclic peptide. In terms of processing, contains 3 disulfide bonds.

In terms of biological role, probably participates in a plant defense mechanism (Potential). Binds to and induces leakage in phospholipd membranes, particularly ones containing 1-palmitoyl-2-oleophosphatidylethanolamine (POPE). The sequence is that of Cyclotide mech-7 from Melicytus chathamicus (Chatham Island mahoe).